The primary structure comprises 746 residues: Zinc finger protein 366 (746 aa).

The segment at Met1–Leu64 is disordered. 11 C2H2-type zinc fingers span residues Trp250–His272, His278–His300, His306–His328, His334–His356, Asn362–His384, Tyr390–His412, Tyr418–His440, His446–His468, Tyr474–His496, Phe502–His524, and Phe530–His553. The interval Gly452–Ile746 is interaction with NRIP1. Positions Pro587 to Ser591 match the PXDLS motif. A disordered region spans residues Pro587–Glu689. The segment covering Cys613–Tyr627 has biased composition (acidic residues). Residues Glu675 to Glu689 show a composition bias toward basic and acidic residues.

Interacts with ESR1 and NRIP1. Interacts (via PXDLS motif) with CTBP1. In terms of tissue distribution, expressed in immature and mature dendritic cells (DCs).

It is found in the nucleus. Functionally, has transcriptional repression activity. Acts as a corepressor of ESR1; the function seems to involve CTBP1 and histone deacetylases. This is Zinc finger protein 366 from Mus musculus (Mouse).